Reading from the N-terminus, the 219-residue chain is AA11 family lytic polysaccharide monooxygenase A (219 aa).

A signal peptide spans 1–18; that stretch reads MMLSKVVMGLLTASLAAA. Histidine 19 lines the Cu(+) pocket. 3 disulfides stabilise this stretch: cysteine 58-cysteine 154, cysteine 94-cysteine 116, and cysteine 185-cysteine 218. A glycan (N-linked (GlcNAc...) asparagine) is linked at asparagine 80. Position 89 (histidine 89) interacts with Cu(+).

It belongs to the polysaccharide monooxygenase AA11 family. Requires Cu(2+) as cofactor.

In terms of biological role, lytic polysaccharide monooxygenase (LPMO) that depolymerizes chitin via the oxidation of scissile beta-(1-4)-glycosidic bonds, yielding C1 or C4 oxidation products. Catalysis by LPMOs requires the reduction of the active-site copper from Cu(II) to Cu(I) by a reducing agent and H(2)O(2) or O(2) as a cosubstrate. Has considerable affinity for alpha-chitin and, more so, beta-chitin. Active toward both alpha-chitin and beta-chitin allomorphs and enhances chitin degradation by an endoacting chitinase, in particular for alpha-chitin, and so plays a role in fungal chitin turnover. The catalytic activity increases when supplying reactions with hydrogen peroxide, confirming that it has peroxygenase activity. Does not show activity on phosphoric acid-swollen cellulose (PASC), Avicel, tamarind xyloglucan, birchwood xylan, beechwood xylan, acetyl glucuronoxylan from aspen, ivory nut mannan, acetylated konjac glucomannan, potato starch, heparin, hyaluronic acid, and chitosan. The protein is AA11 family lytic polysaccharide monooxygenase A of Aspergillus fumigatus (strain CBS 144.89 / FGSC A1163 / CEA10) (Neosartorya fumigata).